The chain runs to 116 residues: MSNVIAELGNATKRTDLPDFRSGDTVKVHVKVVEGNRSRVQIFQGVVIRLQGSGVGRSFTVRKVSFGVGVERTFPLHSPIFEQIEVVTRGDVRRAKLYYLRNLRGKKAKIKERREA.

It belongs to the bacterial ribosomal protein bL19 family.

Its function is as follows. This protein is located at the 30S-50S ribosomal subunit interface and may play a role in the structure and function of the aminoacyl-tRNA binding site. The sequence is that of Large ribosomal subunit protein bL19 from Nocardioides sp. (strain ATCC BAA-499 / JS614).